A 464-amino-acid polypeptide reads, in one-letter code: Trigger factor (464 aa).

Residues 166 to 245 form the PPIase FKBP-type domain; the sequence is GDFLTIDITA…VKAVKERELP (80 aa). The disordered stretch occupies residues 426-464; it reads FVRPGGEEEAPAAEVTEADTAEGEATEVPAEDEKAEAKA. The span at 432 to 455 shows a compositional bias: acidic residues; that stretch reads EEEAPAAEVTEADTAEGEATEVPA.

This sequence belongs to the FKBP-type PPIase family. Tig subfamily.

It localises to the cytoplasm. It catalyses the reaction [protein]-peptidylproline (omega=180) = [protein]-peptidylproline (omega=0). Involved in protein export. Acts as a chaperone by maintaining the newly synthesized protein in an open conformation. Functions as a peptidyl-prolyl cis-trans isomerase. This is Trigger factor from Pseudarthrobacter chlorophenolicus (strain ATCC 700700 / DSM 12829 / CIP 107037 / JCM 12360 / KCTC 9906 / NCIMB 13794 / A6) (Arthrobacter chlorophenolicus).